Here is a 3418-residue protein sequence, read N- to C-terminus: Breast cancer type 2 susceptibility protein (3418 aa).

The interval 1-40 (MPIGSKERPTFFEIFKTRCNKADLGPISLNWFEELSSEAP) is interaction with PALB2. The disordered stretch occupies residues 37–68 (SEAPPYNSEPAEESEHKNNNYEPNLFKTPQRK). The residue at position 70 (S70) is a Phosphoserine. A disordered region spans residues 358–381 (VEPNDTDPLDSNVANQKPFESGSD). S445, S492, and S755 each carry phosphoserine. The segment at 639 to 1000 (LHSSVKRSCS…NKWAGLLGPI (362 aa)) is interaction with NPM1. BRCA2 repeat units lie at residues 1002–1036 (NHSF…DIEE), 1212–1246 (NEVG…DIEN), 1421–1455 (FETS…QKPE), 1517–1551 (KEPT…EKEQ), 1664–1698 (IENS…EGIF), and 1837–1871 (FEVG…DSFS). The segment at 1003–2082 (HSFGGSFRTA…LHKVKGVLEE (1080 aa)) is interaction with RAD51. Residues 1338 to 1781 (GSDSSKNDTV…IEPVLKNVED (444 aa)) are interaction with POLH. The required for stimulation of POLH DNA polymerization activity stretch occupies residues 1410-1595 (TATKTEQNIK…TAAPKCKEMQ (186 aa)). S1970 bears the Phosphoserine mark. The BRCA2 7 repeat unit spans residues 1971 to 2005 (SANTCGIFSTASGKSVQVSDASLQNARQVFSEIED). Position 2035 is a phosphothreonine (T2035). Residues 2051 to 2085 (NSSAFSGFSTASGKQVSILESSLHKVKGVLEEFDL) form a BRCA2 8 repeat. S2095 carries the post-translational modification Phosphoserine. The segment at 2270–2337 (GKRRGEPLIL…EPITCVPFRT (68 aa)) is interaction with HSF2BP. Residues 2350–2545 (TAPGQEFLSK…SHKQLYTYGV (196 aa)) form an interaction with FANCD2 region. A disordered region spans residues 2430 to 2450 (ENRQKQNIDGHGSDDSKNKIN). Residues 2481–2832 (ITSLQNARDI…QRAYPIQWME (352 aa)) are interaction with SEM1. The short motif at 2682–2698 (AAKTLVLCVSDIISLSA) is the Nuclear export signal; masked by interaction with SEM1 element. A Phosphoserine; by CDK1 and CDK2 modification is found at S3291. At S3319 the chain carries Phosphoserine. At T3387 the chain carries Phosphothreonine; by CHEK1 and CHEK2. The interval 3393–3418 (EQESSQASTEECEKNKQDTITTKKYI) is disordered.

As to quaternary structure, monomer and dimer. Interacts with RAD51; regulates RAD51 recruitment and function at sites of DNA repair. Interacts with WDR16, USP11, DMC1, ROCK2 and NPM1. Interacts with SEM1; the interaction masks a nuclear export signal in BRCA2. Interacts with both nonubiquitinated and monoubiquitinated FANCD2; this complex also includes XRCC3 and phosphorylated FANCG. Part of a BRCA complex containing BRCA1, BRCA2 and PALB2. Component of the homologous recombination repair (HR) complex composed of ERCC5/XPG, BRCA2, PALB2, DSS1 and RAD51. Within the complex, interacts with ERCC5/XPG and PALB2. Interacts directly with PALB2 which may serve as a scaffold for a HR complex containing PALB2, BRCA2, RAD51C, RAD51 and XRCC3. Interacts with BRCA1 only in the presence of PALB2 which serves as the bridging protein. Interacts with POLH; the interaction is direct. Interacts with the TREX-2 complex subunits PCID2 and SEM1. Interacts with HSF2BP and BRME1; the interaction with HSF2BP is direct and allows the formation of a ternary complex. The complex BRME1:HSF2BP:BRCA2 interacts with SPATA22, MEIOB and RAD51. Phosphorylated by ATM upon irradiation-induced DNA damage. Phosphorylation by CHEK1 and CHEK2 regulates interaction with RAD51. Phosphorylation at Ser-3291 by CDK1 and CDK2 is low in S phase when recombination is active, but increases as cells progress towards mitosis; this phosphorylation prevents homologous recombination-dependent repair during S phase and G2 by inhibiting RAD51 binding. Post-translationally, ubiquitinated in the absence of DNA damage; this does not lead to proteasomal degradation. In contrast, ubiquitination in response to DNA damage leads to proteasomal degradation. As to expression, highest levels of expression in breast and thymus, with slightly lower levels in lung, ovary and spleen.

The protein localises to the nucleus. It is found in the cytoplasm. It localises to the cytoskeleton. Its subcellular location is the microtubule organizing center. The protein resides in the centrosome. Functionally, involved in double-strand break repair and/or homologous recombination. Binds RAD51 and potentiates recombinational DNA repair by promoting assembly of RAD51 onto single-stranded DNA (ssDNA). Acts by targeting RAD51 to ssDNA over double-stranded DNA, enabling RAD51 to displace replication protein-A (RPA) from ssDNA and stabilizing RAD51-ssDNA filaments by blocking ATP hydrolysis. Part of a PALB2-scaffolded HR complex containing RAD51C and which is thought to play a role in DNA repair by HR. May participate in S phase checkpoint activation. Binds selectively to ssDNA, and to ssDNA in tailed duplexes and replication fork structures. May play a role in the extension step after strand invasion at replication-dependent DNA double-strand breaks; together with PALB2 is involved in both POLH localization at collapsed replication forks and DNA polymerization activity. In concert with NPM1, regulates centrosome duplication. Interacts with the TREX-2 complex (transcription and export complex 2) subunits PCID2 and SEM1, and is required to prevent R-loop-associated DNA damage and thus transcription-associated genomic instability. Silencing of BRCA2 promotes R-loop accumulation at actively transcribed genes in replicating and non-replicating cells, suggesting that BRCA2 mediates the control of R-loop associated genomic instability, independently of its known role in homologous recombination. This Homo sapiens (Human) protein is Breast cancer type 2 susceptibility protein.